A 735-amino-acid polypeptide reads, in one-letter code: MNGDTRAAVVTSPPPTTAPHKERYFDRVDENNPEYLRERNMAPDLRQDFNMMEQKKRVSMILQSPAFCEELESMIQEQFKKGKNPTGLLALQQIADFMTASVPNVYPAAPQGGMAALNMSLGMVTPVNDLRGSDSIAYDKGEKLLRCKLAAFYRLADLFGWSQLIYNHITTRVNSEQEHFLIVPFGLLYSEVTASSLVKVNLQGDIVDRGSTNLGVNQAGFTLHSAVYAARPDAKCIVHIHTPAGAAVSAMKCGLLPISPEALSLGDVAYHDYHGILVDEEEKILIQKNLGPKSKVLILRNHGLVSVGESVEEAFYYIHNLVVACEIQVRTLASAGGPDNLVLLDPGKYKAKSRSPGTPAGEGSGSPPKWQIGEQEFEALMRMLDNLGYRTGYPYRYPALRERSKKYSDVEVPASVTGHSFASDGDSGTCSPLRHSFQKQQREKTRWLHSGRGDDASEEGQNGSSPKSKTKWTKEDGHRTSTSAVPNLFVPLNTNPKEVQEMRNKIREQNLQDIKTAGPQSQVLCGVMMDRSLVQGELVTASKAIIEKEYQPHVIVSTTGPNPFNTLTDRELEEYRREVERKQKGSEENLDETREQKEKSPPDQSAVPNTPPSTPVKLEEDLPQEPTSRDDSDATTFKPTPPDLSPDEPSEALAFPAVEEEAHASPDPTQPPAEADPEPASAPTPGAEEVASPATEEGSPMDPGSDGSPGKSPSKKKKKFRTPSFLKKSKKKSDS.

Met1 carries the N-acetylmethionine modification. The span at 1–11 (MNGDTRAAVVT) shows a compositional bias: low complexity. Residues 1–21 (MNGDTRAAVVTSPPPTTAPHK) form a disordered region. Phosphoserine is present on residues Ser12, Ser59, and Ser64. Position 331 is a phosphothreonine (Thr331). A phosphoserine mark is found at Ser334, Ser353, and Ser355. Position 358 is a phosphothreonine (Thr358). Phosphoserine occurs at positions 364, 366, 408, and 427. Disordered regions lie at residues 418–487 (GHSF…AVPN) and 576–735 (RREV…KSDS). Thr429 carries the post-translational modification Phosphothreonine. A phosphoserine mark is found at Ser431 and Ser436. Basic and acidic residues predominate over residues 440 to 455 (QQREKTRWLHSGRGDD). Position 445 is a phosphothreonine; by ROCK2 (Thr445). Phosphoserine is present on residues Ser464 and Ser465. Position 480 is a phosphothreonine; by ROCK2 (Thr480). Ser481 carries the post-translational modification Phosphoserine; by PKA. A compositionally biased stretch (basic and acidic residues) spans 576-601 (RREVERKQKGSEENLDETREQKEKSP). 3 positions are modified to phosphoserine: Ser586, Ser600, and Ser605. Thr610 is subject to Phosphothreonine. Ser613 carries the post-translational modification Phosphoserine. A Phosphothreonine modification is found at Thr614. Positions 698-712 (GSPMDPGSDGSPGKS) are enriched in low complexity. A phosphoserine mark is found at Ser705, Ser708, and Ser712. Residues 713 to 735 (PSKKKKKFRTPSFLKKSKKKSDS) show a composition bias toward basic residues. Ser714 bears the Phosphoserine; by PKC mark. Positions 715-732 (KKKKKFRTPSFLKKSKKK) are interaction with calmodulin. Ser724 carries the post-translational modification Phosphoserine; by PKA and PKC.

Belongs to the aldolase class II family. Adducin subfamily. In terms of assembly, heterodimer of an alpha and a beta subunit or an alpha and a gamma subunit.

Its subcellular location is the cytoplasm. It is found in the cytoskeleton. It localises to the cell membrane. Membrane-cytoskeleton-associated protein that promotes the assembly of the spectrin-actin network. Binds to calmodulin. The chain is Alpha-adducin (Add1) from Mus musculus (Mouse).